The primary structure comprises 150 residues: Endoribonuclease YbeY (150 aa).

His113, His117, and His123 together coordinate Zn(2+).

The protein belongs to the endoribonuclease YbeY family. The cofactor is Zn(2+).

The protein resides in the cytoplasm. In terms of biological role, single strand-specific metallo-endoribonuclease involved in late-stage 70S ribosome quality control and in maturation of the 3' terminus of the 16S rRNA. This Malacoplasma penetrans (strain HF-2) (Mycoplasma penetrans) protein is Endoribonuclease YbeY.